A 228-amino-acid polypeptide reads, in one-letter code: Rab-like protein 2B (228 aa).

Residues 28 to 35, 76 to 80, and 133 to 136 each bind GTP; these read GDSAVGKS, DTAGQ, and NKID. The interval 200 to 228 is disordered; the sequence is LEQEEEDVPDQEQSSSIETPSEEAASPHS.

This sequence belongs to the small GTPase superfamily. Rab family. As to quaternary structure, interacts (in its GTP-bound form) with CEP19 (via residues 121-150); this interaction is required for its localization to the mother centriole and cilium basal body. Interacts (in its GTP-bound form) with the intraflagellar transport (IFT) complex B (via the IFT74-IFT81 heterodimer). Binding to CEP19 and the IFT74-IFT81 heterodimer is mutually exclusive. In terms of tissue distribution, expressed in the testis.

The protein localises to the cytoplasm. Its subcellular location is the cytoskeleton. It is found in the microtubule organizing center. It localises to the centrosome. The protein resides in the centriole. The protein localises to the cilium basal body. In terms of biological role, small GTPase required for ciliation. Activated in a guanine nucleotide exchange factor (GEF)-independent manner via its intrinsic GDP for GTP nucleotide exchange ability. Involved in ciliary assembly by binding the intraflagellar transport (IFT) complex B from the large pool pre-docked at the base of the cilium and thus triggers its entry into the cilia. This is Rab-like protein 2B (RABL2B) from Homo sapiens (Human).